A 128-amino-acid polypeptide reads, in one-letter code: uncharacterized protein (128 aa).

The chain crosses the membrane as a helical span at residues 8–28 (YQAIYLIFAGFTVFGLLLHFY).

The protein localises to the membrane. This is an uncharacterized protein from Haemophilus influenzae (strain ATCC 51907 / DSM 11121 / KW20 / Rd).